A 360-amino-acid chain; its full sequence is Ribosomal RNA large subunit methyltransferase M (360 aa).

S-adenosyl-L-methionine is bound by residues Ser-190, 223–226, Asp-242, Asp-262, and Asp-280; that span reads CPGG. Lys-309 functions as the Proton acceptor in the catalytic mechanism.

Belongs to the class I-like SAM-binding methyltransferase superfamily. RNA methyltransferase RlmE family. RlmM subfamily. Monomer.

It is found in the cytoplasm. The catalysed reaction is cytidine(2498) in 23S rRNA + S-adenosyl-L-methionine = 2'-O-methylcytidine(2498) in 23S rRNA + S-adenosyl-L-homocysteine + H(+). Functionally, catalyzes the 2'-O-methylation at nucleotide C2498 in 23S rRNA. This chain is Ribosomal RNA large subunit methyltransferase M, found in Haemophilus ducreyi (strain 35000HP / ATCC 700724).